The following is a 102-amino-acid chain: Small ribosomal subunit protein uS10 (102 aa).

It belongs to the universal ribosomal protein uS10 family. As to quaternary structure, part of the 30S ribosomal subunit.

In terms of biological role, involved in the binding of tRNA to the ribosomes. This chain is Small ribosomal subunit protein uS10, found in Cupriavidus metallidurans (strain ATCC 43123 / DSM 2839 / NBRC 102507 / CH34) (Ralstonia metallidurans).